The following is a 234-amino-acid chain: uncharacterized protein (234 aa).

The next 6 membrane-spanning stretches (helical) occupy residues Leu5–Phe23, Ile38–Val60, Ala73–Trp92, Ala127–Leu149, Gly170–Ser192, and Thr197–Phe217.

The protein resides in the cell membrane. This is an uncharacterized protein from Archaeoglobus fulgidus (strain ATCC 49558 / DSM 4304 / JCM 9628 / NBRC 100126 / VC-16).